The sequence spans 152 residues: Ribosome maturation factor RimP (152 aa).

This sequence belongs to the RimP family.

The protein localises to the cytoplasm. Its function is as follows. Required for maturation of 30S ribosomal subunits. The protein is Ribosome maturation factor RimP of Pseudoalteromonas atlantica (strain T6c / ATCC BAA-1087).